Here is a 339-residue protein sequence, read N- to C-terminus: Phenylalanine--tRNA ligase alpha subunit (339 aa).

Position 253 (E253) interacts with Mg(2+).

The protein belongs to the class-II aminoacyl-tRNA synthetase family. Phe-tRNA synthetase alpha subunit type 1 subfamily. Tetramer of two alpha and two beta subunits. The cofactor is Mg(2+).

Its subcellular location is the cytoplasm. The catalysed reaction is tRNA(Phe) + L-phenylalanine + ATP = L-phenylalanyl-tRNA(Phe) + AMP + diphosphate + H(+). In Alcanivorax borkumensis (strain ATCC 700651 / DSM 11573 / NCIMB 13689 / SK2), this protein is Phenylalanine--tRNA ligase alpha subunit.